The sequence spans 128 residues: Centrosomal protein 15 (128 aa).

It localises to the cell projection. The protein resides in the cilium. Its function is as follows. May play a role in ciliary assembly. This chain is Centrosomal protein 15 (CEP15), found in Bos taurus (Bovine).